A 396-amino-acid chain; its full sequence is Elongation factor Tu (396 aa).

Residues 10 to 206 (KPHVNVGTIG…ALDSYIPTPE (197 aa)) enclose the tr-type G domain. The tract at residues 19 to 26 (GHVDHGKT) is G1. 19–26 (GHVDHGKT) is a GTP binding site. Thr-26 serves as a coordination point for Mg(2+). Residues 60–64 (GITIN) form a G2 region. The G3 stretch occupies residues 81–84 (DCPG). GTP is bound by residues 81 to 85 (DCPGH) and 136 to 139 (NKCD). Residues 136-139 (NKCD) form a G4 region. The G5 stretch occupies residues 174 to 176 (SAL).

This sequence belongs to the TRAFAC class translation factor GTPase superfamily. Classic translation factor GTPase family. EF-Tu/EF-1A subfamily. Monomer.

Its subcellular location is the cytoplasm. It catalyses the reaction GTP + H2O = GDP + phosphate + H(+). Functionally, GTP hydrolase that promotes the GTP-dependent binding of aminoacyl-tRNA to the A-site of ribosomes during protein biosynthesis. This chain is Elongation factor Tu, found in Azoarcus sp. (strain BH72).